The chain runs to 59 residues: Small, acid-soluble spore protein H 2 (59 aa).

Belongs to the SspH family.

The protein resides in the spore core. The polypeptide is Small, acid-soluble spore protein H 2 (Geobacillus kaustophilus (strain HTA426)).